A 129-amino-acid polypeptide reads, in one-letter code: Glycine cleavage system H protein (129 aa).

The region spanning 24–106 (SYTVGISEHA…YGDGWFFRIM (83 aa)) is the Lipoyl-binding domain. The residue at position 65 (lysine 65) is an N6-lipoyllysine.

The protein belongs to the GcvH family. As to quaternary structure, the glycine cleavage system is composed of four proteins: P, T, L and H. It depends on (R)-lipoate as a cofactor.

In terms of biological role, the glycine cleavage system catalyzes the degradation of glycine. The H protein shuttles the methylamine group of glycine from the P protein to the T protein. This chain is Glycine cleavage system H protein, found in Shewanella loihica (strain ATCC BAA-1088 / PV-4).